The following is a 160-amino-acid chain: MNIEIYTDGACSKNPGPGGWAYIMVNKDSKEEICRENGGEKSTTNNRMELMAVIRALKKIKEGAASLADKSGKALDYKSISVHTDSQYVQQGISSWIFNWKKNNWKTASKQPVKNQDLWQELDSLSASIKPEWIWVKGHAGNPLNEACDRLAVEACQKMM.

In terms of domain architecture, RNase H type-1 spans 1-157 (MNIEIYTDGA…CDRLAVEACQ (157 aa)). Positions 8, 49, 85, and 149 each coordinate Mg(2+).

Belongs to the RNase H family. Monomer. It depends on Mg(2+) as a cofactor.

Its subcellular location is the cytoplasm. It catalyses the reaction Endonucleolytic cleavage to 5'-phosphomonoester.. Its function is as follows. Endonuclease that specifically degrades the RNA of RNA-DNA hybrids. The sequence is that of Ribonuclease H from Treponema denticola (strain ATCC 35405 / DSM 14222 / CIP 103919 / JCM 8153 / KCTC 15104).